The following is a 633-amino-acid chain: Kelch repeat and BTB domain-containing protein 11 (633 aa).

Residues M1–A118 form a disordered region. Polar residues predominate over residues S35–R60. Residues A61–S73 show a composition bias toward low complexity. Phosphoserine is present on residues S70, S73, S92, S95, S107, and S113. A BTB domain is found at P146–R206. 4 Kelch repeats span residues R317 to N365, Y366 to G418, H419 to G463, and I465 to G506.

The polypeptide is Kelch repeat and BTB domain-containing protein 11 (Kbtbd11) (Mus musculus (Mouse)).